We begin with the raw amino-acid sequence, 143 residues long: Envelope protein A28 homolog (143 aa).

The helical; Signal-anchor for type II membrane protein transmembrane segment at methionine 1–phenylalanine 21 threads the bilayer. The Virion surface portion of the chain corresponds to glutamine 22 to serine 143.

It belongs to the poxviridae A28 protein family. In terms of processing, contains two intramolecular disulfide bonds. They are created by the viral disulfide bond formation pathway, a poxvirus-specific pathway that operates on the cytoplasmic side of the MV membranes.

Its subcellular location is the virion membrane. Envelope protein required for virus entry into host cell and for cell-cell fusion (syncytium formation). This Amsacta (AmEPV) protein is Envelope protein A28 homolog.